The primary structure comprises 429 residues: Na(+)/H(+) antiporter NhaA 1 (429 aa).

The next 12 helical transmembrane spans lie at 32–52 (ISGGLLLAATVLALGWANSPW), 73–93 (LSVQQWAADGLLAIFFFVAGL), 111–131 (VVPVAAAAGGVAVPAVLYSLL), 140–160 (GWAIPTATDIAFALSVLAVVG), 170–190 (FLLTLAVVDDLLAIVIIAVAY), 193–213 (ELSVVPLVAAVVPLAAFTLLV), 219–239 (AWWLLLPLAVLTWALVHASGV), 243–263 (VAGVLLAFAVPVLRSEGAGGP), 284–304 (VAVPVFAFCSAGVTVGGLGGL), 316–336 (VVVGLVVGKAIGIFTTTWLVA), 349–369 (WVDVAGLALLGGVGFTVSLLI), and 383–403 (HVKVGVLTASVTAALLATVVL).

The protein belongs to the NhaA Na(+)/H(+) (TC 2.A.33) antiporter family.

It is found in the cell membrane. The catalysed reaction is Na(+)(in) + 2 H(+)(out) = Na(+)(out) + 2 H(+)(in). In terms of biological role, na(+)/H(+) antiporter that extrudes sodium in exchange for external protons. The chain is Na(+)/H(+) antiporter NhaA 1 from Frankia alni (strain DSM 45986 / CECT 9034 / ACN14a).